A 721-amino-acid polypeptide reads, in one-letter code: Ribosomal RNA large subunit methyltransferase K/L (721 aa).

The 112-residue stretch at 56 to 167 (GMYKACLWSR…REVVTVSIDL (112 aa)) folds into the THUMP domain.

This sequence belongs to the methyltransferase superfamily. RlmKL family.

It is found in the cytoplasm. It catalyses the reaction guanosine(2445) in 23S rRNA + S-adenosyl-L-methionine = N(2)-methylguanosine(2445) in 23S rRNA + S-adenosyl-L-homocysteine + H(+). The catalysed reaction is guanosine(2069) in 23S rRNA + S-adenosyl-L-methionine = N(2)-methylguanosine(2069) in 23S rRNA + S-adenosyl-L-homocysteine + H(+). Functionally, specifically methylates the guanine in position 2445 (m2G2445) and the guanine in position 2069 (m7G2069) of 23S rRNA. The chain is Ribosomal RNA large subunit methyltransferase K/L from Marinomonas sp. (strain MWYL1).